The primary structure comprises 1379 residues: DNA-directed RNA polymerase subunit beta'' (1379 aa).

Residues C220, C293, C300, and C303 each coordinate Zn(2+).

The protein belongs to the RNA polymerase beta' chain family. RpoC2 subfamily. As to quaternary structure, in plastids the minimal PEP RNA polymerase catalytic core is composed of four subunits: alpha, beta, beta', and beta''. When a (nuclear-encoded) sigma factor is associated with the core the holoenzyme is formed, which can initiate transcription. Requires Zn(2+) as cofactor.

Its subcellular location is the plastid. It localises to the chloroplast. The catalysed reaction is RNA(n) + a ribonucleoside 5'-triphosphate = RNA(n+1) + diphosphate. In terms of biological role, DNA-dependent RNA polymerase catalyzes the transcription of DNA into RNA using the four ribonucleoside triphosphates as substrates. The protein is DNA-directed RNA polymerase subunit beta'' of Barbarea verna (Land cress).